The following is a 224-amino-acid chain: N-(5'-phosphoribosyl)anthranilate isomerase (224 aa).

The protein belongs to the TrpF family.

The enzyme catalyses N-(5-phospho-beta-D-ribosyl)anthranilate = 1-(2-carboxyphenylamino)-1-deoxy-D-ribulose 5-phosphate. Its pathway is amino-acid biosynthesis; L-tryptophan biosynthesis; L-tryptophan from chorismate: step 3/5. The chain is N-(5'-phosphoribosyl)anthranilate isomerase from Allorhizobium ampelinum (strain ATCC BAA-846 / DSM 112012 / S4) (Agrobacterium vitis (strain S4)).